The sequence spans 919 residues: Exostosin-like 3 (919 aa).

The Cytoplasmic segment spans residues 1–30 (MTGYTMLRNGGAGNGGQTCMLRWSNRIRLT). Positions 1-140 (MTGYTMLRNG…LKNVISQTEH (140 aa)) are required for interaction with REG3A. A helical; Signal-anchor for type II membrane protein membrane pass occupies residues 31 to 51 (WLSFTLFVILVFFPLIAHYYL). Topologically, residues 52–919 (TTLDEADEAG…HDKTKCFKFI (868 aa)) are lumenal. Intrachain disulfides connect Cys177–Cys182 and Cys188–Cys236. Asn290 is a glycosylation site (N-linked (GlcNAc...) asparagine). Ser362 bears the Phosphoserine mark. Cys400 and Cys415 are oxidised to a cystine. Asn592 carries N-linked (GlcNAc...) asparagine glycosylation. UDP-N-acetyl-alpha-D-glucosamine-binding residues include Leu668, Arg672, Asn697, Asn723, Arg728, Asp744, Asp745, and Asp746. Asp746 contacts Mn(2+). Asn790 is a glycosylation site (N-linked (GlcNAc...) asparagine). Residues Cys831 and Cys879 are joined by a disulfide bond. Residues Glu832, Asp833, and Arg876 each contribute to the UDP-N-acetyl-alpha-D-glucosamine site. Asp833 is a catalytic residue.

This sequence belongs to the glycosyltransferase 47 family. In terms of assembly, homodimer; disulfide-linked. Interacts with REG3A. Requires Mn(2+) as cofactor. As to expression, ubiquitous. Expressed in keratinocytes. Expressed in pancreas.

It is found in the endoplasmic reticulum membrane. It localises to the golgi apparatus. The protein resides in the cell membrane. The protein localises to the nucleus. It catalyses the reaction 3-O-(beta-D-GlcA-(1-&gt;3)-beta-D-Gal-(1-&gt;3)-beta-D-Gal-(1-&gt;4)-beta-D-Xyl)-L-seryl-[protein] + UDP-N-acetyl-alpha-D-glucosamine = 3-O-(alpha-D-GlcNAc-(1-&gt;4)-beta-D-GlcA-(1-&gt;3)-beta-D-Gal-(1-&gt;3)-beta-D-Gal-(1-&gt;4)-beta-D-Xyl)-L-seryl-[protein] + UDP + H(+). Its pathway is glycan metabolism; heparan sulfate biosynthesis. In terms of biological role, glycosyltransferase which regulates the biosynthesis of heparan sulfate (HS). Initiates HS synthesis by transferring the first N-acetyl-alpha-D-glucosamine (alpha-GlcNAc) residue (GlcNAcT-I activity) to the tetrasaccharide linker (GlcA-Gal-Gal-Xyl-)Ser core linker. May also transfer alpha-GlcNAc residues during HS elongation (GlcNAcT-II activity). Lacks glucuronyl transferase II (GlcAT-II) activity. Important for both skeletal development and hematopoiesis, through the formation of HS proteoglycans (HSPGs). Through the synthesis of HS, regulates postnatal pancreatic islet maturation and insulin secretion. Its function is as follows. Receptor for REG3A, REG3B and REG3G, induces the activation of downstream signaling pathways such as PI3K-AKT or RAS-RAF-MEK-ERK signaling pathway. Required for the function of REG3A in regulating keratinocyte proliferation and differentiation. Required for the inhibition of skin inflammation mediated by REG3A through the activation of PI3K-AKT-STAT3 pathway. Required for the function of REG3A and REG3G in glucose tolerance in pancreas. Expressed in microglia, is activated by nociceptor-derived REG3G in response to endotoxins, leading to the inhibition of kynurenine pathway to prevent endotoxic death. The sequence is that of Exostosin-like 3 from Homo sapiens (Human).